The sequence spans 223 residues: MTRRKLGRMKVRPPDPETAQRYLLRFTGRQLYHEAERLPGLSSPELFGDQRPLELDVGCGTGEYICHLARSDPEANFVGVDLHLKSLHKAIRRAEEANLQNIKFICADFRQMYPLLRPSALRAVYLHFPDPGIKPRYRKRRLFNERFLEEMHRAVVPGGRMSLVTDDEDYFRQMLELIERDGRWRRAHEEPYLTGFDPPVKSRFQKMWERRGRTIYRFELVRP.

The S-adenosyl-L-methionine site is built by Asp56, Asp81, Asp108, and Asp130. Residue Asp130 is part of the active site. Residues Lys134 and Asp166 each contribute to the substrate site.

This sequence belongs to the class I-like SAM-binding methyltransferase superfamily. TrmB family.

The catalysed reaction is guanosine(46) in tRNA + S-adenosyl-L-methionine = N(7)-methylguanosine(46) in tRNA + S-adenosyl-L-homocysteine. Its pathway is tRNA modification; N(7)-methylguanine-tRNA biosynthesis. Its function is as follows. Catalyzes the formation of N(7)-methylguanine at position 46 (m7G46) in tRNA. This is tRNA (guanine-N(7)-)-methyltransferase from Rubrobacter xylanophilus (strain DSM 9941 / JCM 11954 / NBRC 16129 / PRD-1).